The chain runs to 189 residues: Chitin synthase 1 (189 aa).

Belongs to the chitin synthase family.

Its subcellular location is the cell membrane. It catalyses the reaction [(1-&gt;4)-N-acetyl-beta-D-glucosaminyl](n) + UDP-N-acetyl-alpha-D-glucosamine = [(1-&gt;4)-N-acetyl-beta-D-glucosaminyl](n+1) + UDP + H(+). Polymerizes chitin, a structural polymer of the cell wall and septum, by transferring the sugar moiety of UDP-GlcNAc to the non-reducing end of the growing chitin polymer. The protein is Chitin synthase 1 (CHS1) of Schizophyllum commune (Split gill fungus).